A 147-amino-acid polypeptide reads, in one-letter code: Large ribosomal subunit protein uL13 (147 aa).

This sequence belongs to the universal ribosomal protein uL13 family. Part of the 50S ribosomal subunit.

In terms of biological role, this protein is one of the early assembly proteins of the 50S ribosomal subunit, although it is not seen to bind rRNA by itself. It is important during the early stages of 50S assembly. The polypeptide is Large ribosomal subunit protein uL13 (Mycolicibacterium smegmatis (strain ATCC 700084 / mc(2)155) (Mycobacterium smegmatis)).